The following is a 396-amino-acid chain: MKFVDEATIYVEAGKGGNGCLSFRREKYVPKGGPDGGDGGDGGSVILEADESINTLIDYRYTRKFKAANGESGRGGNCTGASGADLVLKVPVGTTIIDTDIDEVLGDLVEVGQQIKVAQGGFHGLGNTRYKSSVNQAPRQTKPGQPGESRNIRLELKVLADVGLLGLPNAGKSTLIRGISSAKPKVADYPFTTLVPNLGVVRVQAHRSFVVADIPGLIEGAADGAGLGIRFLKHLVRTRLLLHVVDVSPLDESDPVESAVKIVAELEKFSPALAARDRWLVLNKTDLLAEDEKEAICADILKRLNWSGPSYEISALAGEGLQRLCQDIMTWIERRAEEERDDPEVAEADRLNREQMDQEVRERIQFLNEQRRLARKKAKESDDDDDDEDVEVFYAP.

One can recognise an Obg domain in the interval 1 to 159; the sequence is MKFVDEATIY…RNIRLELKVL (159 aa). The region spanning 160–333 is the OBG-type G domain; sequence ADVGLLGLPN…LCQDIMTWIE (174 aa). Residues 166 to 173, 191 to 195, 213 to 216, 283 to 286, and 314 to 316 contribute to the GTP site; these read GLPNAGKS, FTTLV, DIPG, NKTD, and SAL. Positions 173 and 193 each coordinate Mg(2+). Disordered stretches follow at residues 337–356 and 373–396; these read EEER…REQM and LARK…FYAP. Residues 347–356 show a composition bias toward basic and acidic residues; sequence EADRLNREQM. A compositionally biased stretch (acidic residues) spans 381–396; it reads SDDDDDDEDVEVFYAP.

Belongs to the TRAFAC class OBG-HflX-like GTPase superfamily. OBG GTPase family. In terms of assembly, monomer. Mg(2+) serves as cofactor.

The protein resides in the cytoplasm. Its function is as follows. An essential GTPase which binds GTP, GDP and possibly (p)ppGpp with moderate affinity, with high nucleotide exchange rates and a fairly low GTP hydrolysis rate. Plays a role in control of the cell cycle, stress response, ribosome biogenesis and in those bacteria that undergo differentiation, in morphogenesis control. This is GTPase Obg from Hahella chejuensis (strain KCTC 2396).